A 439-amino-acid chain; its full sequence is Deacetylvindoline O-acetyltransferase (439 aa).

The active-site Proton acceptor is the His-158. Residues 317–344 (TKLVINELRKEKQKIKNLSREKLTYVAQ) are a coiled coil. The Proton acceptor role is filled by Asp-380.

The protein belongs to the plant acyltransferase family. As to quaternary structure, monomer. As to expression, predominantly expressed in young leaves of mature plants. Low expression in stems and flowers and not detected in roots. Confined to the laticifer and idioblast cells of leaves, stems, and flower buds.

Its subcellular location is the cytoplasm. The protein localises to the nucleus. It catalyses the reaction 4-O-deacetylvindoline + acetyl-CoA = vindoline + CoA. Its pathway is alkaloid biosynthesis; vindoline biosynthesis. Its function is as follows. Involved in the biosynthesis of vindoline, a precursor of vinblastine and vincristine. This is Deacetylvindoline O-acetyltransferase from Catharanthus roseus (Madagascar periwinkle).